We begin with the raw amino-acid sequence, 154 residues long: Cyclin-dependent protein kinase inhibitor SMR11 (154 aa).

The segment at 1 to 44 (MEQEEPCEAKETASSSIEPKTPNPNVPDSIPAIDSDSSLSEEEI) is disordered. Low complexity predominate over residues 27-38 (PDSIPAIDSDSS).

In terms of assembly, interacts with CYCB2-4.

Probable cyclin-dependent protein kinase (CDK) inhibitor that functions as a repressor of mitosis in the endoreduplication cell cycle. The polypeptide is Cyclin-dependent protein kinase inhibitor SMR11 (Arabidopsis thaliana (Mouse-ear cress)).